We begin with the raw amino-acid sequence, 55 residues long: Large ribosomal subunit protein bL33 (55 aa).

The protein belongs to the bacterial ribosomal protein bL33 family.

The protein is Large ribosomal subunit protein bL33 of Azorhizobium caulinodans (strain ATCC 43989 / DSM 5975 / JCM 20966 / LMG 6465 / NBRC 14845 / NCIMB 13405 / ORS 571).